We begin with the raw amino-acid sequence, 129 residues long: Large ribosomal subunit protein bL17 (129 aa).

It belongs to the bacterial ribosomal protein bL17 family. As to quaternary structure, part of the 50S ribosomal subunit. Contacts protein L32.

This Pasteurella multocida (strain Pm70) protein is Large ribosomal subunit protein bL17.